We begin with the raw amino-acid sequence, 264 residues long: 3-methyl-2-oxobutanoate hydroxymethyltransferase (264 aa).

2 residues coordinate Mg(2+): Asp45 and Asp84. Residues 45–46 (DS), Asp84, and Lys112 contribute to the 3-methyl-2-oxobutanoate site. Glu114 lines the Mg(2+) pocket. Glu181 functions as the Proton acceptor in the catalytic mechanism.

The protein belongs to the PanB family. Homodecamer; pentamer of dimers. Mg(2+) serves as cofactor.

The protein localises to the cytoplasm. It catalyses the reaction 3-methyl-2-oxobutanoate + (6R)-5,10-methylene-5,6,7,8-tetrahydrofolate + H2O = 2-dehydropantoate + (6S)-5,6,7,8-tetrahydrofolate. It participates in cofactor biosynthesis; (R)-pantothenate biosynthesis; (R)-pantoate from 3-methyl-2-oxobutanoate: step 1/2. Functionally, catalyzes the reversible reaction in which hydroxymethyl group from 5,10-methylenetetrahydrofolate is transferred onto alpha-ketoisovalerate to form ketopantoate. The chain is 3-methyl-2-oxobutanoate hydroxymethyltransferase from Psychromonas ingrahamii (strain DSM 17664 / CCUG 51855 / 37).